A 95-amino-acid polypeptide reads, in one-letter code: Glutamyl-tRNA(Gln) amidotransferase subunit C (95 aa).

Belongs to the GatC family. As to quaternary structure, heterotrimer of A, B and C subunits.

The enzyme catalyses L-glutamyl-tRNA(Gln) + L-glutamine + ATP + H2O = L-glutaminyl-tRNA(Gln) + L-glutamate + ADP + phosphate + H(+). It catalyses the reaction L-aspartyl-tRNA(Asn) + L-glutamine + ATP + H2O = L-asparaginyl-tRNA(Asn) + L-glutamate + ADP + phosphate + 2 H(+). Its function is as follows. Allows the formation of correctly charged Asn-tRNA(Asn) or Gln-tRNA(Gln) through the transamidation of misacylated Asp-tRNA(Asn) or Glu-tRNA(Gln) in organisms which lack either or both of asparaginyl-tRNA or glutaminyl-tRNA synthetases. The reaction takes place in the presence of glutamine and ATP through an activated phospho-Asp-tRNA(Asn) or phospho-Glu-tRNA(Gln). The protein is Glutamyl-tRNA(Gln) amidotransferase subunit C of Caulobacter vibrioides (strain ATCC 19089 / CIP 103742 / CB 15) (Caulobacter crescentus).